The following is a 360-amino-acid chain: uncharacterized protein (360 aa).

In terms of domain architecture, ABC transporter spans 4–235 (LSLQHIQKIY…PANMFVSGFI (232 aa)). 37–44 (GPSGCGKS) serves as a coordination point for ATP.

It belongs to the ABC transporter superfamily.

This is an uncharacterized protein from Escherichia coli (strain K12).